The following is a 167-amino-acid chain: Ubiquitin-fold modifier-conjugating enzyme 1 (167 aa).

Cysteine 116 serves as the catalytic Glycyl thioester intermediate. A Glycyl lysine isopeptide (Lys-Gly) (interchain with G-Cter in UFM1) cross-link involves residue lysine 122.

The protein belongs to the ubiquitin-conjugating enzyme family. UFC1 subfamily. In terms of assembly, interacts with UBA5 (via C-terminus). Interacts with UFL1. Interacts with UFM1. Interacts with KIRREL3. Ufmylated at Lys-122. Deufmylated by UFSP1.

Functionally, E2-like enzyme which specifically catalyzes the second step in ufmylation. Accepts the ubiquitin-like modifier UFM1 from the E1 enzyme UBA5 and forms an intermediate with UFM1 via a thioester linkage. Ufmylation is involved in various processes, such as ribosome recycling, response to DNA damage, interferon response or reticulophagy (also called ER-phagy). In Mus musculus (Mouse), this protein is Ubiquitin-fold modifier-conjugating enzyme 1.